Reading from the N-terminus, the 405-residue chain is Low-salt glycan biosynthesis sulfotransferase Agl7 (405 aa).

Residues D24, D201, and H202 each contribute to the Ca(2+) site.

It belongs to the sulfatase family. Ca(2+) serves as cofactor.

Its pathway is protein modification; protein glycosylation. The protein operates within cell surface structure biogenesis; S-layer biogenesis. Involved in N-glycan biosynthetic pathway that takes place under low-salt conditions (1.75 M instead of 3.4 M). Participates in the formation of the tetrasaccharide present at 'Asn-532' of S-layer glycoprotein Csg, consisting of a sulfated hexose, 2 hexoses and rhamnose. Mediates sulfation of sugar 1 in the tetrasaccharide. The sequence is that of Low-salt glycan biosynthesis sulfotransferase Agl7 from Haloferax volcanii (strain ATCC 29605 / DSM 3757 / JCM 8879 / NBRC 14742 / NCIMB 2012 / VKM B-1768 / DS2) (Halobacterium volcanii).